Reading from the N-terminus, the 94-residue chain is Ribonuclease P protein component 1 (94 aa).

It belongs to the eukaryotic/archaeal RNase P protein component 1 family. Consists of a catalytic RNA component and at least 4-5 protein subunits.

Its subcellular location is the cytoplasm. The enzyme catalyses Endonucleolytic cleavage of RNA, removing 5'-extranucleotides from tRNA precursor.. Part of ribonuclease P, a protein complex that generates mature tRNA molecules by cleaving their 5'-ends. This is Ribonuclease P protein component 1 from Haloarcula marismortui (strain ATCC 43049 / DSM 3752 / JCM 8966 / VKM B-1809) (Halobacterium marismortui).